A 92-amino-acid chain; its full sequence is uncharacterized protein (92 aa).

This is an uncharacterized protein from Sulfolobus spindle-shape virus 1 (SSV1).